A 355-amino-acid polypeptide reads, in one-letter code: Lamassu protein LmuA (355 aa).

Component of antiviral defense system Lamassu type II, composed of LmuA and LmuB. Expression of Lamassu type II in B.subtilis (strain BEST7003) confers resistance to phage SpBeta. May be a nuclease. The protein is Lamassu protein LmuA of Bacillus cereus (strain VD014).